We begin with the raw amino-acid sequence, 972 residues long: FHF complex subunit HOOK-interacting protein 1B (972 aa).

Disordered stretches follow at residues 465–548 and 573–644; these read APSP…GELE and SAPY…SWPE. The residue at position 467 (Ser467) is a Phosphoserine. The segment covering 478–501 has biased composition (low complexity); sequence RGPGSPSVDSSSVTTVPRPSTPSR. Ser510, Ser523, Ser529, and Ser533 each carry phosphoserine. A compositionally biased stretch (low complexity) spans 523 to 535; it reads SPGLSASPASSPG. Ser859 and Ser897 each carry phosphoserine.

It belongs to the FHIP family. As to quaternary structure, component of the FTS/Hook/FHIP complex (FHF complex), composed of AKTIP/FTS, FHIP1B, and one or more members of the Hook family of proteins HOOK1, HOOK2, and HOOK3. The FHF complex associates with the homotypic vesicular sorting complex (the HOPS complex).

Its function is as follows. Component of the FTS/Hook/FHIP complex (FHF complex). The FHF complex may function to promote vesicle trafficking and/or fusion via the homotypic vesicular protein sorting complex (the HOPS complex). FHF complex promotes the distribution of AP-4 complex to the perinuclear area of the cell. The chain is FHF complex subunit HOOK-interacting protein 1B from Homo sapiens (Human).